Reading from the N-terminus, the 372-residue chain is F-box protein AFR (372 aa).

Residues 1-15 (MAEQETTSNINTIND) are compositionally biased toward polar residues. Residues 1–27 (MAEQETTSNINTINDQAEEETRTKSQP) form a disordered region. Residues 29 to 74 (ISGLPNDIAELCLLRLPYPYHALYRSVSSSWNKTITNPRFLFSKQS) enclose the F-box domain. Kelch repeat units lie at residues 80-126 (PYLF…HALS), 135-178 (KLFV…NVNG), 179-227 (KIMA…VIGK), 229-276 (MCVT…IRDR), and 279-325 (VISE…DRVF).

Part of a SCF (ASK-cullin-F-box) protein ligase complex. Interacts with SKP1A.

The protein operates within protein modification; protein ubiquitination. Its function is as follows. Component of SCF (ASK-cullin-F-box) E3 ubiquitin ligase complexes, which may mediate the ubiquitination and subsequent proteasomal degradation of target proteins. Part of the phyA-mediated signaling transduction pathway leading to the regulation of gene expression and hypocotyls elongation in response to red and far-red light exposure. The polypeptide is F-box protein AFR (AFR) (Arabidopsis thaliana (Mouse-ear cress)).